The chain runs to 116 residues: Nitrogen regulatory PII-like protein (116 aa).

It belongs to the P(II) protein family. Needs to interact with NrgA in order to localize correctly to the membrane.

It localises to the cell membrane. Required for full induction of the nrgAB operon under conditions of ammonium limitation. This chain is Nitrogen regulatory PII-like protein (nrgB), found in Bacillus subtilis (strain 168).